The following is a 552-amino-acid chain: Leiomodin-2 (552 aa).

The segment at 1 to 47 is interaction with tropomyosin alpha; that stretch reads MSTFGYRRELSKYEDIDEDELLASLTEEELKELERELEDIEPDRNLP. 2 interaction with actin regions span residues 1 to 169 and 170 to 498; these read MSTF…SSHV and RHKK…KEIK. Residues 13–46 adopt a coiled-coil conformation; the sequence is YEDIDEDELLASLTEEELKELERELEDIEPDRNL. Disordered stretches follow at residues 33–67, 87–191, and 364–531; these read LERE…FSRE, GACE…DGKD, and MDKQ…DNLM. The segment covering 51 to 64 has biased composition (polar residues); sequence RQKSLTEKTPTGTF. The stretch at 86-151 forms a coiled coil; it reads LGACEKDSEQ…DDEDEEKQNS (66 aa). Acidic residues-rich tracts occupy residues 93 to 108 and 115 to 147; these read SEQE…EECF and VSEE…EDEE. Residues 364 to 377 are compositionally biased toward basic and acidic residues; that stretch reads MDKQRQKRMQEQRQ. The segment covering 398-415 has biased composition (low complexity); sequence PRSSPYTSPKSSPWSSPK. Over residues 425–450 the composition is skewed to pro residues; it reads SQPPAPAPPPPPPPPPPPPPPPPPVI. A compositionally biased stretch (basic residues) spans 478–488; that stretch reads QKKKKGKKGKK. Residues 489–513 are compositionally biased toward basic and acidic residues; the sequence is HENSILKEIKDSLKSVSDRKSEEGS. Positions 514-524 are enriched in polar residues; the sequence is RPSTRPSTPQR. Positions 526 to 545 are interaction with actin 3; it reads LHDNLMEAIRASSIKQLRRV. Residues 526-545 form the WH2 domain; that stretch reads LHDNLMEAIRASSIKQLRRV.

It belongs to the tropomodulin family. In terms of assembly, can bind at least three actin monomers and thereby provides a nucleus for actin filament formation. Interacts (via N-terminus) with tropomyosin alpha (TPM1) (via N-terminus). May also interact with TPM2 (via N-terminus).

It is found in the cytoplasm. Its subcellular location is the myofibril. The protein resides in the sarcomere. The protein localises to the m line. It localises to the cytoskeleton. Functionally, mediates nucleation of actin filaments and thereby promotes actin polymerization. Plays a role in the regulation of actin filament length. Required for normal sarcomere organization in the heart, and for normal heart function. This Gallus gallus (Chicken) protein is Leiomodin-2 (LMOD2).